A 457-amino-acid chain; its full sequence is UDP-N-acetylglucosamine 1-carboxyvinyltransferase (457 aa).

34–35 (KN) is a binding site for phosphoenolpyruvate. A UDP-N-acetyl-alpha-D-glucosamine-binding site is contributed by Arg104. Catalysis depends on Cys128, which acts as the Proton donor. Cys128 carries the post-translational modification 2-(S-cysteinyl)pyruvic acid O-phosphothioketal. The UDP-N-acetyl-alpha-D-glucosamine site is built by Asp319 and Ile341. Positions 436–457 (INKSKNRSSNSKLKEVSEIRAA) are disordered. The segment covering 447-457 (KLKEVSEIRAA) has biased composition (basic and acidic residues).

It belongs to the EPSP synthase family. MurA subfamily.

The protein resides in the cytoplasm. It catalyses the reaction phosphoenolpyruvate + UDP-N-acetyl-alpha-D-glucosamine = UDP-N-acetyl-3-O-(1-carboxyvinyl)-alpha-D-glucosamine + phosphate. It participates in cell wall biogenesis; peptidoglycan biosynthesis. In terms of biological role, cell wall formation. Adds enolpyruvyl to UDP-N-acetylglucosamine. The chain is UDP-N-acetylglucosamine 1-carboxyvinyltransferase from Prochlorococcus marinus subsp. pastoris (strain CCMP1986 / NIES-2087 / MED4).